We begin with the raw amino-acid sequence, 209 residues long: DNA ADP-ribosyl transferase (209 aa).

The 201-residue stretch at 9 to 209 (TPIYHITHID…RVCIRKDWYY (201 aa)) folds into the DarT domain. NAD(+) is bound by residues 13–15 (HIT), Gly22, and Leu30. The interval 35–53 (SPPKQRSIAYAHIQERRNR) is NAD(+)-binding element. A DNA-binding region spans residues 44 to 50 (YAHIQER). Residue Arg51 coordinates NAD(+). Arg51 (proton acceptor) is an active-site residue. DNA-binding regions lie at residues 75-80 (RSPMLY), 145-148 (SYWA), and 154-158 (REKKQ). The ADP-ribosylating turn-turn loop stretch occupies residues 116–160 (TDRHGVLSHARFFRQLEELAQLDWEAIQASYWADPPELREKKQAE). Residue Glu160 is part of the active site.

The protein belongs to the DarT ADP-ribosyltransferase family. In terms of assembly, interacts with cognate antitoxin DarG (via C-terminus); this heterodimeric complex neutralizes the toxic effect of DarT by preventing ssDNA binding to DarT and consequently inactivating the toxin by direct protein-protein interactions.

It carries out the reaction a thymidine in DNA + NAD(+) = an N-(ADP-alpha-D-ribosyl)-thymidine in DNA + nicotinamide + H(+). Its function is as follows. Toxic component of the hybrid type II/IV toxin-antitoxin (TA) system DarTG, which plays a crucial role in controlling bacterial growth and bacteriophage infection. In case of phage infection, DarT toxin ADP-ribosylates DNA, which inhibits both viral DNA and RNA synthesis and leads to abortive infection. ADP-ribosylates ssDNA on the second thymidine of the consensus sequence 5'-TNTC-3'; the protein does not auto-modify. Arg-51 is highly flexible, allowing it to assume multiple positions in the crystal structures. Its toxic effect is neutralized by cognate antitoxin DarG. This Thermus sp. (strain 2.9) protein is DNA ADP-ribosyl transferase.